The following is a 441-amino-acid chain: C4-dicarboxylate transport protein (441 aa).

The Cytoplasmic segment spans residues 1–30 (MIIEHSAEVRGKTPLYRHLYVQVLAAIAAG). A helical membrane pass occupies residues 31–49 (ILLGHFYPDIGTELKPLGD). Residues 50–68 (AFIRLVKMIIAPVIFLTVA) lie on the Periplasmic side of the membrane. Residues 69–87 (TGIAGMTDLAKVGRVAGKA) form a helical membrane-spanning segment. At 88–99 (MIYFLAFSTLAL) the chain is on the cytoplasmic side. The chain crosses the membrane as a helical span at residues 100-118 (VVGLVVANVVQPGAGMHID). The Periplasmic segment spans residues 119–149 (PASLDAKAVATYAEKAHEQSITGFLMNIIPT). The helical transmembrane segment at 150–168 (TLVGAFAEGDILQVLFISV) threads the bilayer. Residues 169-171 (LFG) lie on the Cytoplasmic side of the membrane. A helical transmembrane segment spans residues 172–190 (ISLAIVGKKAEPVVDFLQA). Over 191–209 (LTLPIFRLVAILMKAAPIG) the chain is Periplasmic. The helical transmembrane segment at 210-228 (AFGAMAFTIGKYGIASIAN) threads the bilayer. Over 229-241 (LAMLIGTFYLTSF) the chain is Cytoplasmic. Residues 242–260 (LFVFIVLGAVARYNGFSIL) traverse the membrane as a helical segment. The Periplasmic segment spans residues 261–281 (SLIRYIKEELLLVLGTSSSEA). The helical transmembrane segment at 282–300 (ALPGLMNKMEKAGCKRSVV) threads the bilayer. The Cytoplasmic segment spans residues 301–320 (GLVIPTGYSFNLDGTNIYMT). The helical transmembrane segment at 321-339 (LAALFIAQATDTPLSYGDQ) threads the bilayer. The Periplasmic segment spans residues 340–350 (ILLLLVAMLSS). The chain crosses the membrane as a helical span at residues 351–369 (KGAAGITGAGFITLAATLS). At 370–378 (VVPSVPVAG) the chain is on the cytoplasmic side. A helical membrane pass occupies residues 379–398 (MALILGIDRFMSECRALTNF). Residues 399–405 (VGNAVAT) lie on the Periplasmic side of the membrane. The helical transmembrane segment at 406-424 (IVVAKWEGELDQAQLSAAL) threads the bilayer. Topologically, residues 425 to 441 (GGEASVEAIPAVVQPAE) are cytoplasmic.

Belongs to the dicarboxylate/amino acid:cation symporter (DAACS) (TC 2.A.23) family.

It is found in the cell inner membrane. Responsible for the transport of dicarboxylates such as succinate, fumarate, and malate from the periplasm across the inner membrane. This transport system plays an important role in the energy supply of rhizobium-legume symbionts. The protein is C4-dicarboxylate transport protein (dctA) of Rhizobium meliloti (strain 1021) (Ensifer meliloti).